Here is a 249-residue protein sequence, read N- to C-terminus: MTALKTTETIPLYTIRGLPIHGFRNMGTFVDYLFAGERVETGTLVAINAEKVLTAEKEVALRTLLDRAEYKYADGISIVRSIRRKYPQADVTRIAGADLWEALMERAGKQETPVFLVGGKPDVLAQTEAKLRAQWDVNIVGSQDGYFTPEQRDALFERIRASGAQIVTVAMGSPRQEILMRDCRHHYPDALYMGIGGTYDVFTGHVKRAPLVWQNLGLEWLYRLLSQPSRIFRQLRLLKYVAYHYSGRL.

Belongs to the glycosyltransferase 26 family.

It catalyses the reaction UDP-N-acetyl-alpha-D-mannosaminouronate + N-acetyl-alpha-D-glucosaminyl-di-trans,octa-cis-undecaprenyl diphosphate = beta-D-ManNAcA-(1-&gt;4)-alpha-D-GlcNAc-di-trans,octa-cis-undecaprenyl diphosphate + UDP + H(+). Its pathway is bacterial outer membrane biogenesis; enterobacterial common antigen biosynthesis. In terms of biological role, catalyzes the synthesis of Und-PP-GlcNAc-ManNAcA (Lipid II), the second lipid-linked intermediate involved in enterobacterial common antigen (ECA) synthesis. This is UDP-N-acetyl-D-mannosaminuronic acid transferase from Pectobacterium atrosepticum (strain SCRI 1043 / ATCC BAA-672) (Erwinia carotovora subsp. atroseptica).